The chain runs to 371 residues: Bifunctional enzyme IspD/IspF (371 aa).

A 2-C-methyl-D-erythritol 4-phosphate cytidylyltransferase region spans residues 1–212 (MKDITLVLLA…FDFTPASGTI (212 aa)). The segment at 213–371 (FTGNGFDVHA…NLGYFDWRKF (159 aa)) is 2-C-methyl-D-erythritol 2,4-cyclodiphosphate synthase. The a divalent metal cation site is built by Asp219 and His221. 4-CDP-2-C-methyl-D-erythritol 2-phosphate contacts are provided by residues 219–221 (DVH) and 245–246 (HS). His253 serves as a coordination point for a divalent metal cation. Residues 267–269 (DIG), 272–276 (FPDTD), 341–344 (STTE), Phe348, and Arg351 contribute to the 4-CDP-2-C-methyl-D-erythritol 2-phosphate site.

In the N-terminal section; belongs to the IspD/TarI cytidylyltransferase family. IspD subfamily. This sequence in the C-terminal section; belongs to the IspF family. Requires a divalent metal cation as cofactor.

It catalyses the reaction 2-C-methyl-D-erythritol 4-phosphate + CTP + H(+) = 4-CDP-2-C-methyl-D-erythritol + diphosphate. It carries out the reaction 4-CDP-2-C-methyl-D-erythritol 2-phosphate = 2-C-methyl-D-erythritol 2,4-cyclic diphosphate + CMP. It functions in the pathway isoprenoid biosynthesis; isopentenyl diphosphate biosynthesis via DXP pathway; isopentenyl diphosphate from 1-deoxy-D-xylulose 5-phosphate: step 2/6. Its pathway is isoprenoid biosynthesis; isopentenyl diphosphate biosynthesis via DXP pathway; isopentenyl diphosphate from 1-deoxy-D-xylulose 5-phosphate: step 4/6. Bifunctional enzyme that catalyzes the formation of 4-diphosphocytidyl-2-C-methyl-D-erythritol from CTP and 2-C-methyl-D-erythritol 4-phosphate (MEP) (IspD), and catalyzes the conversion of 4-diphosphocytidyl-2-C-methyl-D-erythritol 2-phosphate (CDP-ME2P) to 2-C-methyl-D-erythritol 2,4-cyclodiphosphate (ME-CPP) with a corresponding release of cytidine 5-monophosphate (CMP) (IspF). The polypeptide is Bifunctional enzyme IspD/IspF (Campylobacter hominis (strain ATCC BAA-381 / DSM 21671 / CCUG 45161 / LMG 19568 / NCTC 13146 / CH001A)).